The chain runs to 219 residues: Poxin (219 aa).

Catalysis depends on histidine 17, which acts as the Proton donor. The Shared with catalytic histidine of dimeric partner role is filled by tyrosine 138. Lysine 142 serves as the catalytic Proton acceptor; shared with catalytic histidine of dimeric partner.

The protein belongs to the poxin family. Homodimer.

It carries out the reaction 2',3'-cGAMP + H2O = Gp(2'-5')Ap(3') + H(+). Functionally, nuclease that is responsible for viral evasion of host cGAS-STING innate immunity. Cleaves 2',3'-cGAMP which is produced by host cGAS following recognition of cytosolic DNA and blocks the subsequent 2',3'-cGAMP-mediated activation of TMEM173/STING, which normally spreads to adjacent cells and activates the interferon and NF-kappa-B immune responses. The sequence is that of Poxin (OPG188) from Bos taurus (Bovine).